The sequence spans 130 residues: Ribosome-binding factor A (130 aa).

Belongs to the RbfA family. In terms of assembly, monomer. Binds 30S ribosomal subunits, but not 50S ribosomal subunits or 70S ribosomes.

It localises to the cytoplasm. One of several proteins that assist in the late maturation steps of the functional core of the 30S ribosomal subunit. Associates with free 30S ribosomal subunits (but not with 30S subunits that are part of 70S ribosomes or polysomes). Required for efficient processing of 16S rRNA. May interact with the 5'-terminal helix region of 16S rRNA. This chain is Ribosome-binding factor A, found in Prochlorococcus marinus (strain MIT 9215).